The sequence spans 375 residues: Phosphoglucan phosphatase DSP4, amyloplastic (375 aa).

An amyloplast-targeting transit peptide spans 1-42; that stretch reads MFCVQNLPRSSALPLQSFKSHQRRPPCSVNTLGVMSNVNLHR. Residues 49–71 form a disordered region; that stretch reads ISGPTSSAETSDANVEEEKSETY. Polar residues predominate over residues 51-61; the sequence is GPTSSAETSDA. Residues 92–249 enclose the Tyrosine-protein phosphatase domain; that stretch reads NYNFIRPDLI…AADILTGLRK (158 aa). C193 acts as the Phosphocysteine intermediate in catalysis. 194–199 lines the substrate pocket; it reads TAGLGR. Residues 254–330 are polysaccharide binding; sequence LTWKNPDCTT…NKDGHVNNFV (77 aa).

Expressed in phloem parenchyma of 16-24 week old seedlings and 2 year old trees (at protein level). Expressed in leaves of 16-24 week old seedlings and 2 year old trees.

It localises to the plastid. Its subcellular location is the amyloplast. It is found in the nucleus. Functionally, starch granule-associated phosphoglucan phosphatase involved in the control of starch accumulation. Acts as a major regulator of the initial steps of starch degradation at the granule surface. Functions during the day by dephosphorylating the night-accumulated phospho-oligosaccharides. Can release phosphate from both the C6 and the C3 positions. This Castanea sativa (Sweet chestnut) protein is Phosphoglucan phosphatase DSP4, amyloplastic.